A 256-amino-acid polypeptide reads, in one-letter code: Imidazole glycerol phosphate synthase subunit HisF (256 aa).

Catalysis depends on residues aspartate 11 and aspartate 130.

The protein belongs to the HisA/HisF family. In terms of assembly, heterodimer of HisH and HisF.

The protein resides in the cytoplasm. The catalysed reaction is 5-[(5-phospho-1-deoxy-D-ribulos-1-ylimino)methylamino]-1-(5-phospho-beta-D-ribosyl)imidazole-4-carboxamide + L-glutamine = D-erythro-1-(imidazol-4-yl)glycerol 3-phosphate + 5-amino-1-(5-phospho-beta-D-ribosyl)imidazole-4-carboxamide + L-glutamate + H(+). It participates in amino-acid biosynthesis; L-histidine biosynthesis; L-histidine from 5-phospho-alpha-D-ribose 1-diphosphate: step 5/9. In terms of biological role, IGPS catalyzes the conversion of PRFAR and glutamine to IGP, AICAR and glutamate. The HisF subunit catalyzes the cyclization activity that produces IGP and AICAR from PRFAR using the ammonia provided by the HisH subunit. The protein is Imidazole glycerol phosphate synthase subunit HisF of Thioalkalivibrio sulfidiphilus (strain HL-EbGR7).